Here is an 816-residue protein sequence, read N- to C-terminus: Phosphatidylinositol 4-kinase beta (816 aa).

The tract at residues methionine 1–leucine 30 is disordered. Glycine 2 is modified (N-acetylglycine). One can recognise a PIK helical domain in the interval leucine 29 to serine 242. The interaction with ACBD3 stretch occupies residues serine 41–alanine 67. 2 disordered regions span residues glutamate 101–arginine 120 and alanine 248–serine 318. The residue at position 258 (serine 258) is a Phosphoserine. Threonine 263 is subject to Phosphothreonine. 5 positions are modified to phosphoserine: serine 266, serine 275, serine 277, serine 284, and serine 294. Composition is skewed to polar residues over residues aspartate 278–lysine 297 and serine 306–serine 318. Serine 428 carries the post-translational modification Phosphoserine. Threonine 438 is subject to Phosphothreonine. Residue serine 511 is modified to Phosphoserine. Threonine 517 and threonine 519 each carry phosphothreonine. In terms of domain architecture, PI3K/PI4K catalytic spans glutamate 535–threonine 801. Residues valine 541–glycine 547 are G-loop. The segment at glutamine 668–asparagine 676 is catalytic loop. Positions histidine 687–threonine 711 are activation loop.

It belongs to the PI3/PI4-kinase family. Type III PI4K subfamily. Interacts with ARF1 and ARF3 in the Golgi complex, but not with ARF4, ARF5 or ARF6. Interacts with NCS1/FREQ in a calcium-independent manner. Interacts with CALN1/CABP8 and CALN2/CABP7; in a calcium-dependent manner; this interaction competes with NCS1/FREQ binding. Interacts with ACBD3. Interacts with ARMH3, YWHAB, YWHAE, YWHAG, YWHAH, YWHAQ, YWHAZ and SFN. Interacts with GGA2 (via VHS domain); the interaction is important for PI4KB location at the Golgi apparatus membrane. Interacts with ATG9A. In terms of assembly, (Microbial infection) Interacts with Aichi virus protein 3A. Part of a complex Aichi virus protein 3A/ACBD3/PI4KB that allows the synthesis of PI4P at the viral RNA replication sites. Requires Mg(2+) as cofactor. Mn(2+) serves as cofactor. In terms of tissue distribution, widely expressed with highest levels in heart, skeletal muscle, pancreas, testis and ovary. Weakly expressed in liver. Expressed in the innear ear in the epithelium of the spinal organ of corti.

The protein resides in the endomembrane system. Its subcellular location is the mitochondrion outer membrane. It is found in the rough endoplasmic reticulum membrane. It localises to the golgi apparatus. The protein localises to the golgi apparatus membrane. The protein resides in the cytoplasm. Its subcellular location is the perinuclear region. It catalyses the reaction a 1,2-diacyl-sn-glycero-3-phospho-(1D-myo-inositol) + ATP = a 1,2-diacyl-sn-glycero-3-phospho-(1D-myo-inositol 4-phosphate) + ADP + H(+). With respect to regulation, inhibited by wortmannin and adenosine. Increased kinase activity upon interaction with NCS1/FREQ. (Microbial infection) Activated by Aichi virus protein 3A, this activation is sensitized by ACBD3. Phosphorylates phosphatidylinositol (PI) in the first committed step in the production of the second messenger inositol-1,4,5,-trisphosphate (PIP). May regulate Golgi disintegration/reorganization during mitosis, possibly via its phosphorylation. Involved in Golgi-to-plasma membrane trafficking. May play an important role in the inner ear development. Functionally, (Microbial infection) Plays an essential role in Aichi virus RNA replication. Recruited by ACBD3 at the viral replication sites. In terms of biological role, (Microbial infection) Required for cellular spike-mediated entry of human coronavirus SARS-CoV. The protein is Phosphatidylinositol 4-kinase beta of Homo sapiens (Human).